The following is a 120-amino-acid chain: ATP-dependent Clp protease adapter protein ClpS (120 aa).

Residues Met-1–Ala-27 form a disordered region.

This sequence belongs to the ClpS family. In terms of assembly, binds to the N-terminal domain of the chaperone ClpA.

Its function is as follows. Involved in the modulation of the specificity of the ClpAP-mediated ATP-dependent protein degradation. This is ATP-dependent Clp protease adapter protein ClpS from Pseudomonas putida (strain GB-1).